A 444-amino-acid chain; its full sequence is Phosphoglucosamine mutase (444 aa).

Serine 102 serves as the catalytic Phosphoserine intermediate. 4 residues coordinate Mg(2+): serine 102, aspartate 241, aspartate 243, and aspartate 245. Serine 102 bears the Phosphoserine mark.

This sequence belongs to the phosphohexose mutase family. It depends on Mg(2+) as a cofactor. In terms of processing, activated by phosphorylation.

It catalyses the reaction alpha-D-glucosamine 1-phosphate = D-glucosamine 6-phosphate. Its function is as follows. Catalyzes the conversion of glucosamine-6-phosphate to glucosamine-1-phosphate. The sequence is that of Phosphoglucosamine mutase from Acidovorax ebreus (strain TPSY) (Diaphorobacter sp. (strain TPSY)).